Reading from the N-terminus, the 109-residue chain is Ig kappa chain V region 3374 (109 aa).

The interval alanine 1–cysteine 24 is framework-1. The complementarity-determining-1 stretch occupies residues glutamine 25–alanine 35. The segment at tryptophan 36–tyrosine 50 is framework-2. The segment at arginine 51–serine 57 is complementarity-determining-2. Residues glycine 58–cysteine 89 are framework-3. The tract at residues glutamine 90–alanine 98 is complementarity-determining-3. The framework-4 stretch occupies residues phenylalanine 99 to lysine 108.

The sequence is that of Ig kappa chain V region 3374 from Oryctolagus cuniculus (Rabbit).